Consider the following 361-residue polypeptide: UDP-N-acetylglucosamine--N-acetylmuramyl-(pentapeptide) pyrophosphoryl-undecaprenol N-acetylglucosamine transferase (361 aa).

The UDP-N-acetyl-alpha-D-glucosamine site is built by serine 199 and glutamine 290.

It belongs to the glycosyltransferase 28 family. MurG subfamily.

Its subcellular location is the cell membrane. It catalyses the reaction Mur2Ac(oyl-L-Ala-gamma-D-Glu-L-Lys-D-Ala-D-Ala)-di-trans,octa-cis-undecaprenyl diphosphate + UDP-N-acetyl-alpha-D-glucosamine = beta-D-GlcNAc-(1-&gt;4)-Mur2Ac(oyl-L-Ala-gamma-D-Glu-L-Lys-D-Ala-D-Ala)-di-trans,octa-cis-undecaprenyl diphosphate + UDP + H(+). It functions in the pathway cell wall biogenesis; peptidoglycan biosynthesis. Cell wall formation. Catalyzes the transfer of a GlcNAc subunit on undecaprenyl-pyrophosphoryl-MurNAc-pentapeptide (lipid intermediate I) to form undecaprenyl-pyrophosphoryl-MurNAc-(pentapeptide)GlcNAc (lipid intermediate II). The chain is UDP-N-acetylglucosamine--N-acetylmuramyl-(pentapeptide) pyrophosphoryl-undecaprenol N-acetylglucosamine transferase from Streptococcus mutans serotype c (strain ATCC 700610 / UA159).